A 373-amino-acid polypeptide reads, in one-letter code: GPN-loop GTPase 1 (373 aa).

Ala2 carries the N-acetylalanine modification. Residue 29–34 (GSGKTT) participates in GTP binding. The Gly-Pro-Asn (GPN)-loop; involved in dimer interface motif lies at 86–88 (GPN). 189 to 192 (NKTD) is a binding site for GTP. 3 positions are modified to phosphoserine: Ser301, Ser312, and Ser314. The segment at 304 to 373 (LDTGTATGSS…SMAQYWKKNK (70 aa)) is disordered. Phosphothreonine is present on Thr328. A compositionally biased stretch (acidic residues) spans 330-342 (DEEDEEADSDTDD). Ser338 is subject to Phosphoserine. Thr340 carries the post-translational modification Phosphothreonine. The span at 343–355 (IDHRVTEESREEP) shows a compositional bias: basic and acidic residues.

It belongs to the GPN-loop GTPase family. Heterodimer with GPN3. Binds to RNA polymerase II (RNAPII). Interacts directly with RNAPII subunits RPB4 and RPB7 and the CTD of RPB1. Interacts with XPA.

It is found in the cytoplasm. It localises to the nucleus. Small GTPase required for proper nuclear import of RNA polymerase II (RNAPII). May act at an RNAP assembly step prior to nuclear import. Forms an interface between the RNA polymerase II enzyme and chaperone/scaffolding proteins, suggesting that it is required to connect RNA polymerase II to regulators of protein complex formation. May be involved in nuclear localization of XPA. The polypeptide is GPN-loop GTPase 1 (Bos taurus (Bovine)).